The sequence spans 881 residues: Rho GTPase-activating protein 17 (881 aa).

In terms of domain architecture, BAR spans Gln-14–Glu-246. The region spanning Thr-252–Phe-442 is the Rho-GAP domain. Residues Thr-459–Gly-475 are compositionally biased toward polar residues. The segment at Thr-459–Pro-482 is disordered. 2 positions are modified to phosphoserine: Ser-484 and Ser-575. The disordered stretch occupies residues Gly-511–Leu-881. Residues Arg-592–Gln-617 are compositionally biased toward polar residues. A compositionally biased stretch (pro residues) spans Ala-637 to His-650. Positions Gly-653 to Pro-664 are enriched in low complexity. Residues Ser-665 to Pro-678 are compositionally biased toward pro residues. 2 positions are modified to phosphothreonine: Thr-679 and Thr-682. Residues Thr-679–Pro-698 show a composition bias toward low complexity. 2 positions are modified to phosphoserine: Ser-702 and Ser-704. 3 stretches are compositionally biased toward pro residues: residues Asn-712 to Gln-721, His-752 to Pro-764, and Arg-806 to Pro-816. 3 positions are modified to phosphothreonine: Thr-753, Thr-757, and Thr-759. An SH3-binding motif is present at residues Thr-753 to Leu-766. Ser-762 carries the post-translational modification Phosphoserine. Thr-763 bears the Phosphothreonine mark. Positions Gly-822 to Val-844 are enriched in polar residues. Residues Ser-845–Pro-865 are compositionally biased toward basic and acidic residues. Over residues Ile-872–Leu-881 the composition is skewed to acidic residues.

As to quaternary structure, component of a complex whose core is composed of ARHGAP17, AMOT, PALS1, PATJ and PARD3/PAR3. Interacts with NHERF1, FNBP1, TRIP10, CAPZA (CAPZA1, CAPZA2 or CAPZA3), CAPZB, CD2AP and SH3KBP1/CIN85. In terms of tissue distribution, ubiquitously expressed. Expressed at higher level in heart and placenta.

It is found in the membrane. It localises to the cytoplasm. The protein localises to the cell junction. Its subcellular location is the tight junction. Rho GTPase-activating protein involved in the maintenance of tight junction by regulating the activity of CDC42, thereby playing a central role in apical polarity of epithelial cells. Specifically acts as a GTPase activator for the CDC42 GTPase by converting it to an inactive GDP-bound state. The complex formed with AMOT acts by regulating the uptake of polarity proteins at tight junctions, possibly by deciding whether tight junction transmembrane proteins are recycled back to the plasma membrane or sent elsewhere. Participates in the Ca(2+)-dependent regulation of exocytosis, possibly by catalyzing GTPase activity of Rho family proteins and by inducing the reorganization of the cortical actin filaments. Acts as a GTPase activator in vitro for RAC1. In Homo sapiens (Human), this protein is Rho GTPase-activating protein 17 (ARHGAP17).